Here is a 728-residue protein sequence, read N- to C-terminus: Catalase-peroxidase (728 aa).

The N-terminal stretch at 1-16 (MDNPTDSAGKCPVAHG) is a signal peptide. The segment at 1 to 26 (MDNPTDSAGKCPVAHGNTPRSRSNRD) is disordered. The tryptophyl-tyrosyl-methioninium (Trp-Tyr) (with M-244) cross-link spans 96-218 (WHSAGTYRIT…LGAVQMGFIY (123 aa)). The active-site Proton acceptor is H97. Residues 218–244 (YVNPEGPNGNSDPLASARDIRETFARM) constitute a cross-link (tryptophyl-tyrosyl-methioninium (Tyr-Met) (with W-96)). H259 contributes to the heme b binding site.

Belongs to the peroxidase family. Peroxidase/catalase subfamily. As to quaternary structure, homodimer or homotetramer. The cofactor is heme b. Formation of the three residue Trp-Tyr-Met cross-link is important for the catalase, but not the peroxidase activity of the enzyme.

The catalysed reaction is H2O2 + AH2 = A + 2 H2O. It catalyses the reaction 2 H2O2 = O2 + 2 H2O. Functionally, bifunctional enzyme with both catalase and broad-spectrum peroxidase activity. This chain is Catalase-peroxidase, found in Rhizobium leguminosarum bv. phaseoli.